The sequence spans 238 residues: Small ribosomal subunit protein eS4 (238 aa).

The 64-residue stretch at 38 to 101 (LPLALIIRDV…GEVYRVVPDA (64 aa)) folds into the S4 RNA-binding domain.

Belongs to the eukaryotic ribosomal protein eS4 family.

The protein is Small ribosomal subunit protein eS4 of Pyrobaculum aerophilum (strain ATCC 51768 / DSM 7523 / JCM 9630 / CIP 104966 / NBRC 100827 / IM2).